Consider the following 269-residue polypeptide: MLRIDSLSKRYPTGDMALKGVTLEVPDGQVMALIGPSGAGKSTLLRCINRLVEPTSGSIWLNGIDLTRLNTRELRQARRKIGMIFQEYALVERLTVMENVLSGQLGYVNFWQSWFRKFPQATIDEAFRLLDRVGLSDFPDKRADALSGGQRQRVGIARALLQNPELLLVDEPTASLDPKTSRQIMRLINELASERGLSVIINIHDVPLAQMFAQRIVGLRFGEVVYDGPPNRLTPSVLNEIYGEEDWNASGPAQDSEENEAVSAGVATH.

One can recognise an ABC transporter domain in the interval Leu2 to Asp246. Gly35–Ser42 contributes to the ATP binding site. The disordered stretch occupies residues Asp246–His269.

It belongs to the ABC transporter superfamily. Phosphonates importer (TC 3.A.1.9.1) family. As to quaternary structure, the complex is composed of two ATP-binding proteins (PhnC), two transmembrane proteins (PhnE) and a solute-binding protein (PhnD).

It is found in the cell inner membrane. The enzyme catalyses phosphonate(out) + ATP + H2O = phosphonate(in) + ADP + phosphate + H(+). Its function is as follows. Part of the ABC transporter complex PhnCDE involved in phosphonates import. Responsible for energy coupling to the transport system. The chain is Phosphonates import ATP-binding protein PhnC 2 from Synechococcus sp. (strain JA-2-3B'a(2-13)) (Cyanobacteria bacterium Yellowstone B-Prime).